A 158-amino-acid chain; its full sequence is Transcription elongation factor GreA (158 aa).

The stretch at 46 to 66 forms a coiled coil; the sequence is AEYEAAKERQGFIEGRISELE.

Belongs to the GreA/GreB family.

Its function is as follows. Necessary for efficient RNA polymerase transcription elongation past template-encoded arresting sites. The arresting sites in DNA have the property of trapping a certain fraction of elongating RNA polymerases that pass through, resulting in locked ternary complexes. Cleavage of the nascent transcript by cleavage factors such as GreA or GreB allows the resumption of elongation from the new 3'terminus. GreA releases sequences of 2 to 3 nucleotides. This Neisseria meningitidis serogroup A / serotype 4A (strain DSM 15465 / Z2491) protein is Transcription elongation factor GreA.